The sequence spans 2214 residues: Multifunctional protein URA2 (2214 aa).

The residue at position 2 (Ala2) is an N-acetylalanine. Positions 2–400 (ATIAPTAPIT…PGPRDTEFLF (399 aa)) are GATase (Glutamine amidotransferase). L-glutamine-binding residues include Ser64, Gly273, and Gly275. The 186-residue stretch at 228–413 (RILAIDVGMK…IQAVKEFKYT (186 aa)) folds into the Glutamine amidotransferase type-1 domain. The active-site Nucleophile; for GATase activity is Cys302. L-glutamine contacts are provided by Leu303, Gln306, Asn344, Gly346, and Phe347. Catalysis depends on for GATase activity residues His386 and Glu388. The segment at 401-440 (DVFIQAVKEFKYTQVLKPIAFPGGLLEDNVKAHPRIEAKK) is linker. The CPSase A stretch occupies residues 440–980 (KVLVLGSGGL…DSHDLSFDDH (541 aa)). The segment at 440–1482 (KVLVLGSGGL…TNVKCAKLLI (1043 aa)) is CPSase (Carbamoyl phosphate synthase). 12 residues coordinate ATP: Arg558, Arg598, Gly604, Gly605, Lys635, Met637, Glu642, Gly668, Ile669, His670, Gln711, and Glu725. 2 ATP-grasp domains span residues 562–754 (SNAI…KLGL) and 1099–1290 (SRML…KAIM). 3 residues coordinate Mg(2+): Gln711, Glu725, and Asn727. The Mn(2+) site is built by Gln711, Glu725, and Asn727. The CPSase B stretch occupies residues 981–1482 (GVMVLGSGVY…TNVKCAKLLI (502 aa)). ATP contacts are provided by Arg1135, Lys1174, Ile1176, Glu1181, Gly1206, Val1207, His1208, Ser1209, Gln1249, and Glu1261. Residues Gln1249, Glu1261, and Asn1263 each contribute to the Mg(2+) site. Mn(2+)-binding residues include Gln1249, Glu1261, and Asn1263. The MGS-like domain maps to 1356–1508 (FKLPKKNILL…QTSHRTITLP (153 aa)). The linker stretch occupies residues 1483 to 1492 (EAISRNITLD). The segment at 1493 to 1821 (VSERDAQTSH…YNGETLVLSG (329 aa)) is defective DHOase domain. Residues 1822–1909 (ELVSPGAKGK…NLIRSNNPFR (88 aa)) are linker. A Glycyl lysine isopeptide (Lys-Gly) (interchain with G-Cter in ubiquitin) cross-link involves residue Lys1853. A Phosphoserine; by PKA modification is found at Ser1857. Residues 1910-2214 (GRHILSIKQF…LLAMVMGVDM (305 aa)) are ATCase (Aspartate transcarbamylase). 2 residues coordinate carbamoyl phosphate: Arg1962 and Thr1963. Lys1990 provides a ligand contact to L-aspartate. Residues Arg2011, His2039, and Gln2042 each contribute to the carbamoyl phosphate site. 2 residues coordinate L-aspartate: Arg2072 and Arg2134. The carbamoyl phosphate site is built by Leu2173 and Pro2174.

The protein in the N-terminal section; belongs to the CarA family. It in the 2nd section; belongs to the CarB family. This sequence in the 3rd section; belongs to the metallo-dependent hydrolases superfamily. DHOase family. CAD subfamily. In the C-terminal section; belongs to the aspartate/ornithine carbamoyltransferase superfamily. ATCase family. Mg(2+) serves as cofactor. It depends on Mn(2+) as a cofactor.

It localises to the cytoplasm. The enzyme catalyses hydrogencarbonate + L-glutamine + 2 ATP + H2O = carbamoyl phosphate + L-glutamate + 2 ADP + phosphate + 2 H(+). The catalysed reaction is L-glutamine + H2O = L-glutamate + NH4(+). It catalyses the reaction hydrogencarbonate + NH4(+) + 2 ATP = carbamoyl phosphate + 2 ADP + phosphate + 2 H(+). It carries out the reaction carbamoyl phosphate + L-aspartate = N-carbamoyl-L-aspartate + phosphate + H(+). Its pathway is pyrimidine metabolism; UMP biosynthesis via de novo pathway; (S)-dihydroorotate from bicarbonate: step 1/3. The protein operates within pyrimidine metabolism; UMP biosynthesis via de novo pathway; (S)-dihydroorotate from bicarbonate: step 2/3. With respect to regulation, both CPSase and ATCase activities are feedback inhibited by the end product UTP. Multifunctional protein that encodes the first 2 enzymatic activities of the de novo pyrimidine pathway: carbamoylphosphate synthetase (CPSase; EC 6.3.5.5) and aspartate transcarbamylase (ATCase; EC 2.1.3.2). The CPSase-function is accomplished in 2 steps, by a glutamine-dependent amidotransferase activity (GATase) that binds and cleaves glutamine to produce ammonia, followed by an ammonium-dependent carbamoyl phosphate synthetase, which reacts with the ammonia, hydrogencarbonate and ATP to form carbamoyl phosphate. The endogenously produced carbamoyl phosphate is sequestered and channeled to the ATCase active site. ATCase then catalyzes the formation of carbamoyl-L-aspartate from L-aspartate and carbamoyl phosphate. The polypeptide is Multifunctional protein URA2 (URA2) (Saccharomyces cerevisiae (strain ATCC 204508 / S288c) (Baker's yeast)).